The following is a 277-amino-acid chain: NH(3)-dependent NAD(+) synthetase (277 aa).

An ATP-binding site is contributed by 36–43 (GLSGGIDS). Mg(2+) is bound at residue Asp42. A deamido-NAD(+)-binding site is contributed by Arg118. Thr138 provides a ligand contact to ATP. Glu143 is a Mg(2+) binding site. 2 residues coordinate ATP: Lys167 and Ser189.

This sequence belongs to the NAD synthetase family. As to quaternary structure, homodimer.

It catalyses the reaction deamido-NAD(+) + NH4(+) + ATP = AMP + diphosphate + NAD(+) + H(+). It functions in the pathway cofactor biosynthesis; NAD(+) biosynthesis; NAD(+) from deamido-NAD(+) (ammonia route): step 1/1. In terms of biological role, catalyzes the ATP-dependent amidation of deamido-NAD to form NAD. Uses ammonia as a nitrogen source. This Chlorobium phaeovibrioides (strain DSM 265 / 1930) (Prosthecochloris vibrioformis (strain DSM 265)) protein is NH(3)-dependent NAD(+) synthetase.